The chain runs to 880 residues: DNA-directed RNA polymerase subunit beta C-terminal section (880 aa).

It belongs to the RNA polymerase beta chain family. As to quaternary structure, in plastids the minimal PEP RNA polymerase catalytic core is composed of four subunits: alpha, beta, beta', and beta''. When a (nuclear-encoded) sigma factor is associated with the core the holoenzyme is formed, which can initiate transcription.

The protein localises to the plastid. It localises to the chloroplast. The enzyme catalyses RNA(n) + a ribonucleoside 5'-triphosphate = RNA(n+1) + diphosphate. DNA-dependent RNA polymerase catalyzes the transcription of DNA into RNA using the four ribonucleoside triphosphates as substrates. This Pleurastrum terricola (Filamentous green alga) protein is DNA-directed RNA polymerase subunit beta C-terminal section (rpoB2).